The chain runs to 882 residues: Chondroitin sulfate synthase 3 (882 aa).

The Cytoplasmic segment spans residues 1–7; sequence MAVRSRR. The chain crosses the membrane as a helical; Signal-anchor for type II membrane protein span at residues 8–28; that stretch reads PWMSVALGLVLGFTAASWLIA. At 29 to 882 the chain is on the lumenal side; the sequence is PRVAELSERK…LGVRYNRTLS (854 aa). Residues 46 to 167 are disordered; that stretch reads SYYGRSAAGP…GDGGAAAPSA (122 aa). Low complexity-rich tracts occupy residues 59–69 and 120–131; these read AQQPLPQPQSR and GATGLPGAPAAE. N-linked (GlcNAc...) asparagine glycans are attached at residues N155, N279, and N710. The a divalent metal cation site is built by D720 and H834. N878 carries N-linked (GlcNAc...) asparagine glycosylation.

It belongs to the chondroitin N-acetylgalactosaminyltransferase family. The cofactor is Co(2+). It depends on Mn(2+) as a cofactor. Cd(2+) serves as cofactor. As to expression, detected at low levels in brain, cerebral cortex, uterus and small intestine.

It is found in the golgi apparatus. Its subcellular location is the golgi stack membrane. It carries out the reaction 3-O-(beta-D-GlcA-(1-&gt;3)-beta-D-GalNAc-(1-&gt;4)-beta-D-GlcA-(1-&gt;3)-beta-D-Gal-(1-&gt;3)-beta-D-Gal-(1-&gt;4)-beta-D-Xyl)-L-seryl-[protein] + UDP-N-acetyl-alpha-D-galactosamine = 3-O-(beta-D-GalNAc-(1-&gt;4)-beta-D-GlcA-(1-&gt;3)-beta-D-GalNAc-(1-&gt;4)-beta-D-GlcA-(1-&gt;3)-beta-D-Gal-(1-&gt;3)-beta-D-Gal-(1-&gt;4)-beta-D-Xyl)-L-seryl-[protein] + UDP + H(+). The enzyme catalyses 3-O-{beta-D-GlcA-(1-&gt;3)-[beta-D-GalNAc-(1-&gt;4)-beta-D-GlcA-(1-&gt;3)](n)-beta-D-GalNAc-(1-&gt;4)-beta-D-GlcA-(1-&gt;3)-beta-D-Gal-(1-&gt;3)-beta-D-Gal-(1-&gt;4)-beta-D-Xyl}-L-seryl-[protein] + UDP-N-acetyl-alpha-D-galactosamine = 3-O-{[beta-D-GalNAc-(1-&gt;4)-beta-D-GlcA-(1-&gt;3)](n+1)-beta-D-GalNAc-(1-&gt;4)-beta-D-GlcA-(1-&gt;3)-beta-D-Gal-(1-&gt;3)-beta-D-Gal-(1-&gt;4)-beta-D-Xyl}-L-seryl-[protein] + UDP + H(+). The catalysed reaction is 3-O-(beta-D-GalNAc-(1-&gt;4)-beta-D-GlcA-(1-&gt;3)-beta-D-Gal-(1-&gt;3)-beta-D-Gal-(1-&gt;4)-beta-D-Xyl)-L-seryl-[protein] + UDP-alpha-D-glucuronate = 3-O-(beta-D-GlcA-(1-&gt;3)-beta-D-GalNAc-(1-&gt;4)-beta-D-GlcA-(1-&gt;3)-beta-D-Gal-(1-&gt;3)-beta-D-Gal-(1-&gt;4)-beta-D-Xyl)-L-seryl-[protein] + UDP + H(+). It catalyses the reaction 3-O-{[beta-D-GalNAc-(1-&gt;4)-beta-D-GlcA-(1-&gt;3)](n)-beta-D-GalNAc-(1-&gt;4)-beta-D-GlcA-(1-&gt;3)-beta-D-Gal-(1-&gt;3)-beta-D-Gal-(1-&gt;4)-beta-D-Xyl}-L-seryl-[protein] + UDP-alpha-D-glucuronate = 3-O-{beta-D-GlcA-(1-&gt;3)-[beta-D-GalNAc-(1-&gt;4)-beta-D-GlcA-(1-&gt;3)](n)-beta-D-GalNAc-(1-&gt;4)-beta-D-GlcA-(1-&gt;3)-beta-D-Gal-(1-&gt;3)-beta-D-Gal-(1-&gt;4)-beta-D-Xyl}-L-seryl-[protein] + UDP + H(+). Functionally, has both beta-1,3-glucuronic acid and beta-1,4-N-acetylgalactosamine transferase activity. Transfers glucuronic acid (GlcUA) from UDP-GlcUA and N-acetylgalactosamine (GalNAc) from UDP-GalNAc to the non-reducing end of the elongating chondroitin polymer. Specific activity is much reduced compared to CHSY1. The protein is Chondroitin sulfate synthase 3 (CHSY3) of Homo sapiens (Human).